Reading from the N-terminus, the 109-residue chain is uncharacterized protein (109 aa).

An HTH hxlR-type domain is found at 10-109; it reads APFEYTLSLI…WGMAQGGPHM (100 aa).

This is an uncharacterized protein from Bacillus subtilis (strain 168).